Here is a 217-residue protein sequence, read N- to C-terminus: MOB kinase activator-like 2 (217 aa).

The segment at 15 to 38 (GKESIRGNYKPKKHPRGSSRHTMR) is disordered. The segment covering 23–38 (YKPKKHPRGSSRHTMR) has biased composition (basic residues). C89, C94, H167, and H172 together coordinate Zn(2+).

It belongs to the MOB1/phocein family.

This is MOB kinase activator-like 2 (mob2) from Dictyostelium discoideum (Social amoeba).